The chain runs to 397 residues: Acetate kinase (397 aa).

Asn7 is a Mg(2+) binding site. Lys14 provides a ligand contact to ATP. Arg90 is a substrate binding site. The Proton donor/acceptor role is filled by Asp147. Residues 207–211 (HLGNG), 282–284 (DFR), and 330–334 (GIGEN) contribute to the ATP site. Glu384 lines the Mg(2+) pocket.

The protein belongs to the acetokinase family. In terms of assembly, homodimer. The cofactor is Mg(2+). Requires Mn(2+) as cofactor.

Its subcellular location is the cytoplasm. The enzyme catalyses acetate + ATP = acetyl phosphate + ADP. It participates in metabolic intermediate biosynthesis; acetyl-CoA biosynthesis; acetyl-CoA from acetate: step 1/2. Catalyzes the formation of acetyl phosphate from acetate and ATP. Can also catalyze the reverse reaction. The chain is Acetate kinase from Agathobacter rectalis (strain ATCC 33656 / DSM 3377 / JCM 17463 / KCTC 5835 / VPI 0990) (Eubacterium rectale).